Here is a 37-residue protein sequence, read N- to C-terminus: Large ribosomal subunit protein bL36 (37 aa).

Belongs to the bacterial ribosomal protein bL36 family.

The sequence is that of Large ribosomal subunit protein bL36 from Aromatoleum aromaticum (strain DSM 19018 / LMG 30748 / EbN1) (Azoarcus sp. (strain EbN1)).